A 406-amino-acid chain; its full sequence is Nuclear hormone receptor family member nhr-133 (406 aa).

The nuclear receptor DNA-binding region spans serine 8–asparagine 83. The NR C4-type zinc-finger motif lies at cysteine 11–cysteine 31. The NR C4-type; degenerate zinc finger occupies aspartate 47–cysteine 66. Positions tyrosine 150 to serine 406 constitute an NR LBD domain.

Belongs to the nuclear hormone receptor family.

The protein localises to the nucleus. Its function is as follows. Orphan nuclear receptor. This is Nuclear hormone receptor family member nhr-133 from Caenorhabditis elegans.